The sequence spans 85 residues: MERKSRKVRTGRVVSDKMDKTVVVAVDTLVKHPLYGRTVRRTRKFMAHDEDNQCRIGDKVKIAETRPLSRHKRWRVAEVLERSQI.

The protein belongs to the universal ribosomal protein uS17 family. As to quaternary structure, part of the 30S ribosomal subunit.

In terms of biological role, one of the primary rRNA binding proteins, it binds specifically to the 5'-end of 16S ribosomal RNA. This Desulforudis audaxviator (strain MP104C) protein is Small ribosomal subunit protein uS17.